The primary structure comprises 506 residues: Maturase K (506 aa).

This sequence belongs to the intron maturase 2 family. MatK subfamily.

It is found in the plastid. The protein localises to the chloroplast. In terms of biological role, usually encoded in the trnK tRNA gene intron. Probably assists in splicing its own and other chloroplast group II introns. This Rhododendron tsusiophyllum (Rhododendron) protein is Maturase K.